An 86-amino-acid chain; its full sequence is MSVKIRLKRMGAKKRPYYRVVVMNSTSPRDGRAIEELGYYHPVEKQNQIKIKEDRMKDWISKGAILSDTVKMLLNKNNLNAKSQEV.

It belongs to the bacterial ribosomal protein bS16 family.

The chain is Small ribosomal subunit protein bS16 from Borreliella burgdorferi (strain ATCC 35210 / DSM 4680 / CIP 102532 / B31) (Borrelia burgdorferi).